A 910-amino-acid chain; its full sequence is Importin subunit beta-2 (910 aa).

HEAT repeat units lie at residues 12–39, 44–82, 93–126, 132–169, 177–207, 220–247, 259–286, 302–406, 414–442, 454–481, 499–532, 540–573, 581–619, 627–677, 690–721, 729–764, 772–807, 815–848, and 857–888; these read VLVE…NLLE, IPDL…VSSL, YTKS…RWGI, VLPQ…LDRD, DFMI…QFVL, FLET…VYLL, GSIV…FWLA, DKIV…LSSF, IILP…GAIA, PELY…TLGR, FVPL…EEQA, LEPI…ADYV, RYIE…VALR, AETY…ALGS, LGQI…MYCF, DALL…LQLG, KPLL…VYNP, ELFY…LACN, and PMFV…VELF. The region spanning 34–122 is the Importin N-terminal domain; that stretch reads ALNLLEKAKD…SGNVITTIIS (89 aa). The interval 333-381 is disordered; it reads DREEDIRPQHAKGKSRITLNTQGPITQQGSSNADADELEDEDEDDDEFD. Positions 349–364 are enriched in polar residues; it reads ITLNTQGPITQQGSSN. Positions 366-381 are enriched in acidic residues; the sequence is DADELEDEDEDDDEFD.

The protein belongs to the importin beta family. Importin beta-2 subfamily. As to quaternary structure, interacts with Ran; interacts specifically with the GTP-bound form of Ran (GTP-Ran), protecting it from GTP hydrolysis and nucleotide exchange. Interacts with nucleoporins.

The protein resides in the cytoplasm. Its subcellular location is the nucleus envelope. In terms of biological role, functions in nuclear protein import as nuclear transport receptor. Serves as receptor for arginine/glycine-rich nuclear localization signals (rg-NLS) and PY-NLS in cargo substrates. Its predominant cargo substrate seems to be mRNA-binding proteins. Mediates docking of the importin/substrate complex to the nuclear pore complex (NPC) through binding to repeat-containing nucleoporins. The complex is subsequently translocated through the pore by an energy requiring, Ran-dependent mechanism. At the nucleoplasmic side of the NPC, GTP-Ran binding leads to release of the cargo. The importin is re-exported from the nucleus to the cytoplasm where GTP hydrolysis releases Ran from importin. The directionality of nuclear import is thought to be conferred by an asymmetric distribution of the GTP- and GDP-bound forms of Ran between the cytoplasm and nucleus. The chain is Importin subunit beta-2 from Schizosaccharomyces pombe (strain 972 / ATCC 24843) (Fission yeast).